The following is a 127-amino-acid chain: Large ribosomal subunit protein bL12 (127 aa).

This sequence belongs to the bacterial ribosomal protein bL12 family. In terms of assembly, homodimer. Part of the ribosomal stalk of the 50S ribosomal subunit. Forms a multimeric L10(L12)X complex, where L10 forms an elongated spine to which 2 to 4 L12 dimers bind in a sequential fashion. Binds GTP-bound translation factors.

Functionally, forms part of the ribosomal stalk which helps the ribosome interact with GTP-bound translation factors. Is thus essential for accurate translation. This is Large ribosomal subunit protein bL12 from Bordetella bronchiseptica (strain ATCC BAA-588 / NCTC 13252 / RB50) (Alcaligenes bronchisepticus).